We begin with the raw amino-acid sequence, 356 residues long: tRNA-specific 2-thiouridylase MnmA (356 aa).

ATP is bound by residues 6–13 (GMSGGVDS) and leucine 32. The active-site Nucleophile is the cysteine 102. The cysteines at positions 102 and 200 are disulfide-linked. Glycine 127 is a binding site for ATP. Residues 150 to 152 (RDQ) are interaction with tRNA. The active-site Cysteine persulfide intermediate is cysteine 200. The interaction with tRNA stretch occupies residues 302-303 (RY).

This sequence belongs to the MnmA/TRMU family.

It is found in the cytoplasm. The catalysed reaction is S-sulfanyl-L-cysteinyl-[protein] + uridine(34) in tRNA + AH2 + ATP = 2-thiouridine(34) in tRNA + L-cysteinyl-[protein] + A + AMP + diphosphate + H(+). Its function is as follows. Catalyzes the 2-thiolation of uridine at the wobble position (U34) of tRNA, leading to the formation of s(2)U34. The sequence is that of tRNA-specific 2-thiouridylase MnmA from Aquifex aeolicus (strain VF5).